The chain runs to 1288 residues: Disease resistance protein RRS1 (1288 aa).

Residues 5–146 (EKDEEFVCIS…EIVRDVYETH (142 aa)) enclose the TIR domain. The segment at 25-26 (SH) is important for interaction with RPS4. The NB-ARC domain maps to 170–421 (IGIRCVGIWG…LLEGCGFFPH (252 aa)). 179–186 (GMPGIGKT) serves as a coordination point for ATP. LRR repeat units lie at residues 498–522 (SEEI…AFKN), 535–553 (NPEV…HSLP), 554–575 (NELR…NFDP), 577–598 (HLVE…TKNL), 621–646 (AENL…RLLR), 665–688 (PPNI…TVKP), 697–720 (LTEI…NSSC), 740–764 (LPNM…SIQG), 766–791 (PRFL…SLEI), 792–807 (LNAH…NMAN), 808–829 (LEFL…QGFP), and 830–852 (RNLK…PLSL). A Nuclear localization signal motif is present at residues 986–1003 (RKFHCWAPWQVVPKVRKD). A DNA-binding region (WRKY) is located at residues 1202–1270 (IPAIDEGDLW…YLSEHNHPRP (69 aa)). Positions 1267-1288 (HPRPTKRKALADSTRSTSSSIC) are disordered. Residues 1279-1288 (STRSTSSSIC) are compositionally biased toward polar residues.

This sequence belongs to the disease resistance TIR-NB-LRR family. As to quaternary structure, interacts with PopP2, a R.solanacearum type III effector. Interacts with RPS4.

It localises to the nucleus. The protein resides in the cytoplasm. Transcription factor. Interacts specifically with the W box (5'-(T)TGAC[CT]-3'), a frequently occurring elicitor-responsive cis-acting element. Also acts as a disease resistance protein involved in resistance to fungal and bacterial pathogens, including R.solanacearum, P.syringae pv. tomato and C.higginsianum. Heterodimerization with RPS4 is required to form a functional complex to recognize AvrRps4 and PopP2. Contributes to temperature-conditioned RPS4 auto-immunity. The protein is Disease resistance protein RRS1 of Arabidopsis thaliana (Mouse-ear cress).